The primary structure comprises 378 residues: Mevalonate kinase (378 aa).

ATP contacts are provided by residues K10, S138, and G143–S149. S149 and E193 together coordinate Mg(2+). Residue D204 is the Proton acceptor of the active site.

This sequence belongs to the GHMP kinase family. Mevalonate kinase subfamily. Requires Mg(2+) as cofactor.

The protein localises to the cytoplasm. The enzyme catalyses (R)-mevalonate + ATP = (R)-5-phosphomevalonate + ADP + H(+). Its pathway is isoprenoid biosynthesis; isopentenyl diphosphate biosynthesis via mevalonate pathway; isopentenyl diphosphate from (R)-mevalonate: step 1/3. Its activity is regulated as follows. Its activity is inhibited in vitro by geranyl pyrophosphate (GPP) and farnesyl pyrophosphate (FPP) that bind competitively at the ATP-binding site on the enzyme. Catalyzes the phosphorylation of mevalonate to mevalonate 5-phosphate, a key step in isoprenoid and cholesterol biosynthesis. The sequence is that of Mevalonate kinase from Arabidopsis thaliana (Mouse-ear cress).